The sequence spans 185 residues: Peptide deformylase (185 aa).

2 residues coordinate Fe cation: C98 and H140. E141 is an active-site residue. H144 serves as a coordination point for Fe cation.

Belongs to the polypeptide deformylase family. Fe(2+) is required as a cofactor.

The enzyme catalyses N-terminal N-formyl-L-methionyl-[peptide] + H2O = N-terminal L-methionyl-[peptide] + formate. Its function is as follows. Removes the formyl group from the N-terminal Met of newly synthesized proteins. Requires at least a dipeptide for an efficient rate of reaction. N-terminal L-methionine is a prerequisite for activity but the enzyme has broad specificity at other positions. This is Peptide deformylase from Parabacteroides distasonis (strain ATCC 8503 / DSM 20701 / CIP 104284 / JCM 5825 / NCTC 11152).